A 736-amino-acid polypeptide reads, in one-letter code: Dynamin-1-like protein (736 aa).

Methionine 1 is modified (N-acetylmethionine). The 281-residue stretch at isoleucine 22–proline 302 folds into the Dynamin-type G domain. Positions glycine 32–serine 39 are G1 motif. Residue glycine 32 to serine 40 coordinates GTP. The segment at valine 58–arginine 60 is G2 motif. A G3 motif region spans residues aspartate 146–glycine 149. The segment at threonine 215–aspartate 218 is G4 motif. Residues threonine 215–aspartate 221 and asparagine 246–glutamine 249 contribute to the GTP site. Residues valine 245–serine 248 form a G5 motif region. Positions tyrosine 344 to isoleucine 489 are middle domain. An interaction with GSK3B region spans residues asparagine 448–glutamate 685. Residues alanine 502–asparagine 569 form a b domain region. The tract at residues glutamate 523–arginine 590 is disordered. Phosphoserine is present on serine 529. Glycyl lysine isopeptide (Lys-Gly) (interchain with G-Cter in SUMO) cross-links involve residues lysine 532 and lysine 535. The span at proline 537–glutamate 554 shows a compositional bias: low complexity. Serine 548 carries the phosphoserine modification. The segment covering alanine 555–lysine 568 has biased composition (basic and acidic residues). Residues lysine 558 and lysine 568 each participate in a glycyl lysine isopeptide (Lys-Gly) (interchain with G-Cter in SUMO) cross-link. Residues threonine 585 and threonine 586 are each glycosylated (O-linked (GlcNAc) threonine). Lysine 594 is covalently cross-linked (Glycyl lysine isopeptide (Lys-Gly) (interchain with G-Cter in SUMO)). The residue at position 597 (lysine 597) is an N6-acetyllysine; alternate. Lysine 597 participates in a covalent cross-link: Glycyl lysine isopeptide (Lys-Gly) (interchain with G-Cter in SUMO); alternate. Lysine 606 is covalently cross-linked (Glycyl lysine isopeptide (Lys-Gly) (interchain with G-Cter in SUMO)). Serine 607 carries the phosphoserine modification. Lysine 608 participates in a covalent cross-link: Glycyl lysine isopeptide (Lys-Gly) (interchain with G-Cter in SUMO). A Phosphoserine; by CDK1 and PINK1 modification is found at serine 616. Position 637 is a phosphoserine; by CAMK1 and PKA (serine 637). S-nitrosocysteine is present on cysteine 644. The 92-residue stretch at cysteine 644–leucine 735 folds into the GED domain. An important for homodimerization region spans residues tyrosine 654–lysine 668.

This sequence belongs to the TRAFAC class dynamin-like GTPase superfamily. Dynamin/Fzo/YdjA family. Homotetramer; dimerizes through the N-terminal GTP-middle region of one molecule binding to the GED domain of another DNM1L molecule. Oligomerizes in a GTP-dependent manner to form membrane-associated tubules with a spiral pattern. Interacts with GSK3B and MARCHF5. Interacts (via the GTPase and B domains) with UBE2I; the interaction promotes sumoylation of DNM1L, mainly in its B domain. Interacts with PPP3CA; the interaction dephosphorylates DNM1L and regulates its transition to mitochondria. Interacts with BCL2L1 isoform BCL-X(L) and CLTA; DNM1L and BCL2L1 isoform BCL-X(L) may form a complex in synaptic vesicles that also contains clathrin and MFF. Interacts with MFF; the interaction is inhibited by C11orf65/MFI. Interacts with FIS1; may form part of a larger protein complex at the endoplasmic reticulum-mitochondrial interface during mitochondrial fission. Interacts with CANX. Interacts with BCAP31. Interacts with MIEF2 and MIEF1; GTP-dependent, regulates GTP hydrolysis and DNM1L oligomerization. Interacts with PGAM5; this interaction leads to dephosphorylation at Ser-656 and activation of GTPase activity and eventually to mitochondria fragmentation. Interacts with RALBP1; during mitosis, recruits DNM1L to the mitochondrion and mediates its activation by the mitotic kinase cyclin B-CDK1. Interacts with FUNDC1; this interaction recruits DNM1L/DRP1 at ER-mitochondria contact sites. Post-translationally, phosphorylation/dephosphorylation events on two sites near the GED domain regulate mitochondrial fission. Phosphorylation on Ser-637 by CAMK1 and PKA inhibits the GTPase activity, leading to a defect in mitochondrial fission promoting mitochondrial elongation. Dephosphorylated on this site by PPP3CA which promotes mitochondrial fission. Phosphorylation on Ser-616 by CDK1 and PINK1 activates the GTPase activity and promotes mitochondrial fission. Phosphorylated in a circadian manner at Ser-637. Dephosphorylated by PGAM5. Sumoylated on various lysine residues within the B domain, probably by MUL1. Sumoylation positively regulates mitochondrial fission. Desumoylated by SENP5 during G2/M transition of mitosis. Appears to be linked to its catalytic activity. In terms of processing, S-nitrosylation increases DNM1L dimerization, mitochondrial fission and causes neuronal damage. Post-translationally, ubiquitination by MARCHF5 affects mitochondrial morphology. O-GlcNAcylation augments the level of the GTP-bound active form of DNM1L and induces translocation from the cytoplasm to mitochondria in cardiomyocytes. It also decreases phosphorylation at Ser-637. Ubiquitously expressed with highest levels found in skeletal muscles, heart, kidney and brain. Isoform 1 is brain-specific. Isoform 2 and isoform 3 are predominantly expressed in testis and skeletal muscles respectively. Isoform 4 is weakly expressed in brain, heart and kidney. Isoform 5 is dominantly expressed in liver, heart and kidney. Isoform 6 is expressed in neurons.

It localises to the cytoplasm. The protein localises to the cytosol. It is found in the golgi apparatus. Its subcellular location is the endomembrane system. The protein resides in the mitochondrion outer membrane. It localises to the peroxisome. The protein localises to the membrane. It is found in the clathrin-coated pit. Its subcellular location is the cytoplasmic vesicle. The protein resides in the secretory vesicle. It localises to the synaptic vesicle membrane. It carries out the reaction GTP + H2O = GDP + phosphate + H(+). GTPase activity is increased by binding to phospholipid membranes. In terms of biological role, functions in mitochondrial and peroxisomal division. Mediates membrane fission through oligomerization into membrane-associated tubular structures that wrap around the scission site to constrict and sever the mitochondrial membrane through a GTP hydrolysis-dependent mechanism. The specific recruitment at scission sites is mediated by membrane receptors like MFF, MIEF1 and MIEF2 for mitochondrial membranes. While the recruitment by the membrane receptors is GTP-dependent, the following hydrolysis of GTP induces the dissociation from the receptors and allows DNM1L filaments to curl into closed rings that are probably sufficient to sever a double membrane. Acts downstream of PINK1 to promote mitochondrial fission in a PRKN-dependent manner. Plays an important role in mitochondrial fission during mitosis. Through its function in mitochondrial division, ensures the survival of at least some types of postmitotic neurons, including Purkinje cells, by suppressing oxidative damage. Required for normal brain development, including that of cerebellum. Facilitates developmentally regulated apoptosis during neural tube formation. Required for a normal rate of cytochrome c release and caspase activation during apoptosis; this requirement may depend upon the cell type and the physiological apoptotic cues. Required for formation of endocytic vesicles. Proposed to regulate synaptic vesicle membrane dynamics through association with BCL2L1 isoform Bcl-X(L) which stimulates its GTPase activity in synaptic vesicles; the function may require its recruitment by MFF to clathrin-containing vesicles. Required for programmed necrosis execution. Rhythmic control of its activity following phosphorylation at Ser-637 is essential for the circadian control of mitochondrial ATP production. Its function is as follows. Inhibits peroxisomal division when overexpressed. This is Dynamin-1-like protein from Homo sapiens (Human).